Consider the following 277-residue polypeptide: MGIRVYKPTTNGRRNMTSLDFAEITTSTPEKSLLVALKSKAGRNNNGRITVRHQGGGHKRFYRLVDFKRNKDNVEAVVKTIEYDPNRSANIALVHYTDGVKAYIIAPKGLEVGQRIVSGPEADIKVGNALPLANIPVGTLIHNIELKPGRGGELVRAAGASAQVLGSEGKYVLVRLQSGEVRMILGTCRATVGVVGNEQHGLVNLGKAGRSRWKGIRPTVRGSVMNPNDHPHGGGEGKAPVGRKAPSTPWGKPALGLKTRNKKAKSDKLIVRRRNEK.

Positions 219 to 277 (TVRGSVMNPNDHPHGGGEGKAPVGRKAPSTPWGKPALGLKTRNKKAKSDKLIVRRRNEK) are disordered. Positions 264–277 (AKSDKLIVRRRNEK) are enriched in basic and acidic residues.

Belongs to the universal ribosomal protein uL2 family. In terms of assembly, part of the 50S ribosomal subunit. Forms a bridge to the 30S subunit in the 70S ribosome.

Functionally, one of the primary rRNA binding proteins. Required for association of the 30S and 50S subunits to form the 70S ribosome, for tRNA binding and peptide bond formation. It has been suggested to have peptidyltransferase activity; this is somewhat controversial. Makes several contacts with the 16S rRNA in the 70S ribosome. The sequence is that of Large ribosomal subunit protein uL2 from Streptococcus pneumoniae serotype 2 (strain D39 / NCTC 7466).